Reading from the N-terminus, the 203-residue chain is MKIINILFCISLLLLNSCNSNDNDTLKNNAQQTKSRKKRDLSQEELPQQEKITLTSDEEKMFTSLINVFKYTIEKLNNEIQGCMNGNKSKCNDFFDWLSEDIQKQKELAGAFTKVYNFLKSKAQNETFDTYIKGAIDCKKNTPQDCNKNNKYGDGDNLIEQYFRGVANDMSNRNSNEEIYQYLKDELLKEDNHYAGLTANWQN.

A signal peptide spans 1–17 (MKIINILFCISLLLLNS). Cysteine 18 carries N-palmitoyl cysteine lipidation. The S-diacylglycerol cysteine moiety is linked to residue cysteine 18. Residues 26 to 47 (LKNNAQQTKSRKKRDLSQEELP) are disordered.

It belongs to the Multicopy lipoprotein (Mlp) family.

The protein resides in the cell outer membrane. An outer membrane protein that may participate in pathogenesis. Some human Lyme disease patients have antibodies against this protein. The Mlp proteins probably undergo intragenic recombination, generating new alleles. This is Lipoprotein MlpJ from Borreliella burgdorferi (strain ATCC 35210 / DSM 4680 / CIP 102532 / B31) (Borrelia burgdorferi).